Consider the following 388-residue polypeptide: Ferrochelatase (388 aa).

Residues histidine 196 and glutamate 277 each coordinate Fe cation.

The protein belongs to the ferrochelatase family.

It is found in the cytoplasm. The enzyme catalyses heme b + 2 H(+) = protoporphyrin IX + Fe(2+). The protein operates within porphyrin-containing compound metabolism; protoheme biosynthesis; protoheme from protoporphyrin-IX: step 1/1. Its function is as follows. Catalyzes the ferrous insertion into protoporphyrin IX. This Trichormus variabilis (strain ATCC 29413 / PCC 7937) (Anabaena variabilis) protein is Ferrochelatase.